The primary structure comprises 213 residues: A-type ATP synthase subunit D (213 aa).

The protein belongs to the V-ATPase D subunit family. Has multiple subunits with at least A(3), B(3), C, D, E, F, H, I and proteolipid K(x).

It is found in the cell membrane. Functionally, component of the A-type ATP synthase that produces ATP from ADP in the presence of a proton gradient across the membrane. The chain is A-type ATP synthase subunit D from Saccharolobus islandicus (strain Y.N.15.51 / Yellowstone #2) (Sulfolobus islandicus).